A 955-amino-acid chain; its full sequence is Disintegrin and metalloproteinase domain-containing protein 19 (955 aa).

The signal sequence occupies residues methionine 1–alanine 25. Positions arginine 26 to lysine 202 are excised as a propeptide. The Cysteine switch motif lies at serine 130–glycine 137. Cysteine 132 is a binding site for Zn(2+). The N-linked (GlcNAc...) asparagine glycan is linked to asparagine 144. Residues arginine 203–serine 699 lie on the Extracellular side of the membrane. Residues lysine 210–proline 408 form the Peptidase M12B domain. 3 cysteine pairs are disulfide-bonded: cysteine 320–cysteine 403, cysteine 360–cysteine 387, and cysteine 361–cysteine 370. Histidine 345 provides a ligand contact to Zn(2+). Glutamate 346 is an active-site residue. Residues histidine 349 and histidine 355 each contribute to the Zn(2+) site. Positions glycine 416–aspartate 502 constitute a Disintegrin domain. Asparagine 444 and asparagine 447 each carry an N-linked (GlcNAc...) asparagine glycan. Cysteine 474 and cysteine 494 are disulfide-bonded. An N-linked (GlcNAc...) asparagine glycan is attached at asparagine 645. The 33-residue stretch at glutamate 650–asparagine 682 folds into the EGF-like domain. Cystine bridges form between cysteine 654–cysteine 664, cysteine 658–cysteine 670, and cysteine 672–cysteine 681. The chain crosses the membrane as a helical span at residues valine 700 to methionine 720. The Cytoplasmic segment spans residues tyrosine 721–alanine 955. Over residues serine 753–glutamine 771 the composition is skewed to polar residues. A disordered region spans residues serine 753–leucine 917. 2 stretches are compositionally biased toward pro residues: residues serine 787–aspartate 796 and arginine 833–proline 844. The SH3-binding motif lies at arginine 833–proline 844.

Interacts with SH3PXD2A. Requires Zn(2+) as cofactor. The precursor is cleaved by a furin endopeptidase. In terms of tissue distribution, expressed in many normal organ tissues and several cancer cell lines.

The protein resides in the membrane. Functionally, participates in the proteolytic processing of beta-type neuregulin isoforms which are involved in neurogenesis and synaptogenesis, suggesting a regulatory role in glial cell. Also cleaves alpha-2 macroglobulin. May be involved in osteoblast differentiation and/or osteoblast activity in bone. In Homo sapiens (Human), this protein is Disintegrin and metalloproteinase domain-containing protein 19 (ADAM19).